The following is a 206-amino-acid chain: MHERNYAVFRLLPLASLLLAACSVHTPSGPAKSQTSPEWRAHQQSLSALGRYQTRGAFAYLSSQQKVYALFNWQQTSADRYRLILTNPLGSTEMDLNVQPGVAQLVNNQGKRYVSDDPEVMIQKLAGMSIPLNDLRQWMLGLPGDATDFTLDSRGYLHTLNYSHNGQLWTVTYQGYHDDTVPALPSNLKLRQGDNRIKLKMDSWSL.

The first 21 residues, 1–21 (MHERNYAVFRLLPLASLLLAA), serve as a signal peptide directing secretion. Cys22 carries the N-palmitoyl cysteine lipid modification. Cys22 is lipidated: S-diacylglycerol cysteine.

Belongs to the LolB family. Monomer.

It is found in the cell outer membrane. Its function is as follows. Plays a critical role in the incorporation of lipoproteins in the outer membrane after they are released by the LolA protein. This is Outer-membrane lipoprotein LolB from Sodalis glossinidius (strain morsitans).